The chain runs to 196 residues: DnaA initiator-associating protein DiaA (196 aa).

Residues 34 to 196 form the SIS domain; the sequence is LVQSLLNGNK…DNTLFPHQDD (163 aa).

It belongs to the SIS family. DiaA subfamily. As to quaternary structure, homotetramer; dimer of dimers.

Its function is as follows. Required for the timely initiation of chromosomal replication via direct interactions with the DnaA initiator protein. The protein is DnaA initiator-associating protein DiaA of Shigella boydii serotype 18 (strain CDC 3083-94 / BS512).